Here is a 103-residue protein sequence, read N- to C-terminus: Viscotoxin-B (103 aa).

An N-terminal signal peptide occupies residues 1 to 6 (FRNVES). Cystine bridges form between C9–C46, C10–C38, and C22–C32. A propeptide spans 53-103 (FYCTLGCQSSKCASITTPPNSEVDAEAVRCKAACSNLCDFGVTTNQEIQDD) (acidic domain).

It belongs to the plant thionin (TC 1.C.44) family.

The protein localises to the secreted. In terms of biological role, thionins are small plant proteins which are toxic to animal cells. They seem to exert their toxic effect at the level of the cell membrane. Their precise function is not known. The chain is Viscotoxin-B (THI2.2) from Viscum album (European mistletoe).